Consider the following 937-residue polypeptide: Valine--tRNA ligase (937 aa).

The 'HIGH' region motif lies at Pro-44–His-54. Residues Lys-548–Ser-552 carry the 'KMSKS' region motif. Residue Lys-551 coordinates ATP. A coiled-coil region spans residues Ala-874 to Ala-937.

Belongs to the class-I aminoacyl-tRNA synthetase family. ValS type 1 subfamily. In terms of assembly, monomer.

The protein localises to the cytoplasm. The enzyme catalyses tRNA(Val) + L-valine + ATP = L-valyl-tRNA(Val) + AMP + diphosphate. Functionally, catalyzes the attachment of valine to tRNA(Val). As ValRS can inadvertently accommodate and process structurally similar amino acids such as threonine, to avoid such errors, it has a 'posttransfer' editing activity that hydrolyzes mischarged Thr-tRNA(Val) in a tRNA-dependent manner. This chain is Valine--tRNA ligase, found in Laribacter hongkongensis (strain HLHK9).